Consider the following 228-residue polypeptide: MSSYFLNSTFPVTLPGGQESFLGQIPLYSSGYTDPLRHYPGAAYGGSSVQEKAYPSSFYQQANGAYSRATAAGPCDYATASFYREKDPACALASIEEHSFVLSQDHRKTDCTGSTGKSIYPEADEQKPSAPVYPWMQRMNSCNGTFGNAGRRGRQTYTRYQTLELEKEFHFNRYLTRRRRIEIAHALCLTERQIKIWFQNRRMKWKKENKLINCSQTSGEEEEEKRTE.

An Antp-type hexapeptide motif is present at residues 132-137 (VYPWMQ). A DNA-binding region (homeobox) is located at residues 150–209 (GRRGRQTYTRYQTLELEKEFHFNRYLTRRRRIEIAHALCLTERQIKIWFQNRRMKWKKEN).

The protein belongs to the Antp homeobox family.

Its subcellular location is the nucleus. Functionally, sequence-specific transcription factor which is part of a developmental regulatory system that provides cells with specific positional identities on the anterior-posterior axis. The chain is Homeobox protein Hox-B6a (hoxb6a) from Danio rerio (Zebrafish).